A 152-amino-acid chain; its full sequence is Small ribosomal subunit protein uS17A (152 aa).

It belongs to the universal ribosomal protein uS17 family. As to quaternary structure, component of the small ribosomal subunit (SSU). Mature yeast ribosomes consist of a small (40S) and a large (60S) subunit. The 40S small subunit contains 1 molecule of ribosomal RNA (18S rRNA) and at least 33 different proteins. The large 60S subunit contains 3 rRNA molecules (25S, 5.8S and 5S rRNA) and at least 46 different proteins.

It localises to the cytoplasm. Its subcellular location is the nucleus. Component of the ribosome, a large ribonucleoprotein complex responsible for the synthesis of proteins in the cell. The small ribosomal subunit (SSU) binds messenger RNAs (mRNAs) and translates the encoded message by selecting cognate aminoacyl-transfer RNA (tRNA) molecules. The large subunit (LSU) contains the ribosomal catalytic site termed the peptidyl transferase center (PTC), which catalyzes the formation of peptide bonds, thereby polymerizing the amino acids delivered by tRNAs into a polypeptide chain. The nascent polypeptides leave the ribosome through a tunnel in the LSU and interact with protein factors that function in enzymatic processing, targeting, and the membrane insertion of nascent chains at the exit of the ribosomal tunnel. This Schizosaccharomyces pombe (strain 972 / ATCC 24843) (Fission yeast) protein is Small ribosomal subunit protein uS17A (rps1101).